Consider the following 419-residue polypeptide: 3-isopropylmalate dehydratase large subunit (419 aa).

3 residues coordinate [4Fe-4S] cluster: Cys300, Cys360, and Cys363.

This sequence belongs to the aconitase/IPM isomerase family. LeuC type 2 subfamily. Heterodimer of LeuC and LeuD. It depends on [4Fe-4S] cluster as a cofactor.

The catalysed reaction is (2R,3S)-3-isopropylmalate = (2S)-2-isopropylmalate. It participates in amino-acid biosynthesis; L-leucine biosynthesis; L-leucine from 3-methyl-2-oxobutanoate: step 2/4. In terms of biological role, catalyzes the isomerization between 2-isopropylmalate and 3-isopropylmalate, via the formation of 2-isopropylmaleate. The protein is 3-isopropylmalate dehydratase large subunit of Clostridium botulinum (strain Alaska E43 / Type E3).